The primary structure comprises 107 residues: UPF0473 protein LACR_0139 (107 aa).

It belongs to the UPF0473 family.

The protein is UPF0473 protein LACR_0139 of Lactococcus lactis subsp. cremoris (strain SK11).